The sequence spans 446 residues: tRNA (guanine-N(7)-)-methyltransferase non-catalytic subunit TRM82 (446 aa).

The segment at 67–97 is disordered; it reads LTQTSEDTEQENTAPYKKQKSSVSKPIKVPK. Residues 87 to 97 show a composition bias toward low complexity; sequence SSVSKPIKVPK. WD repeat units lie at residues 107 to 147, 202 to 243, and 247 to 287; these read PIYN…TENC, GHVS…IVKH, and GHRE…LLSK.

It belongs to the WD repeat TRM82 family. Forms a heterodimer with the catalytic subunit TRM8.

It localises to the nucleus. Its pathway is tRNA modification; N(7)-methylguanine-tRNA biosynthesis. Required for the formation of N(7)-methylguanine at position 46 (m7G46) in tRNA. In the complex, it is required to stabilize and induce conformational changes of the catalytic subunit. The chain is tRNA (guanine-N(7)-)-methyltransferase non-catalytic subunit TRM82 from Debaryomyces hansenii (strain ATCC 36239 / CBS 767 / BCRC 21394 / JCM 1990 / NBRC 0083 / IGC 2968) (Yeast).